The sequence spans 498 residues: Probable cytosol aminopeptidase (498 aa).

K271 and D276 together coordinate Mn(2+). K283 is a catalytic residue. The Mn(2+) site is built by D294, D353, and E355. R357 is a catalytic residue.

This sequence belongs to the peptidase M17 family. Requires Mn(2+) as cofactor.

The protein resides in the cytoplasm. The enzyme catalyses Release of an N-terminal amino acid, Xaa-|-Yaa-, in which Xaa is preferably Leu, but may be other amino acids including Pro although not Arg or Lys, and Yaa may be Pro. Amino acid amides and methyl esters are also readily hydrolyzed, but rates on arylamides are exceedingly low.. It catalyses the reaction Release of an N-terminal amino acid, preferentially leucine, but not glutamic or aspartic acids.. Its function is as follows. Presumably involved in the processing and regular turnover of intracellular proteins. Catalyzes the removal of unsubstituted N-terminal amino acids from various peptides. In Bordetella petrii (strain ATCC BAA-461 / DSM 12804 / CCUG 43448), this protein is Probable cytosol aminopeptidase.